A 650-amino-acid chain; its full sequence is Acetyl-coenzyme A synthetase (650 aa).

CoA-binding positions include 191-194 (RGGR), threonine 311, and asparagine 335. ATP-binding positions include 387-389 (GEP), 411-416 (DTWWQT), aspartate 500, and arginine 515. Serine 523 serves as a coordination point for CoA. Arginine 526 contributes to the ATP binding site. 3 residues coordinate Mg(2+): valine 537, histidine 539, and valine 542. CoA is bound at residue arginine 584. Lysine 609 carries the N6-acetyllysine modification.

It belongs to the ATP-dependent AMP-binding enzyme family. Requires Mg(2+) as cofactor. Post-translationally, acetylated. Deacetylation by the SIR2-homolog deacetylase activates the enzyme.

The enzyme catalyses acetate + ATP + CoA = acetyl-CoA + AMP + diphosphate. Catalyzes the conversion of acetate into acetyl-CoA (AcCoA), an essential intermediate at the junction of anabolic and catabolic pathways. AcsA undergoes a two-step reaction. In the first half reaction, AcsA combines acetate with ATP to form acetyl-adenylate (AcAMP) intermediate. In the second half reaction, it can then transfer the acetyl group from AcAMP to the sulfhydryl group of CoA, forming the product AcCoA. The sequence is that of Acetyl-coenzyme A synthetase from Shewanella sediminis (strain HAW-EB3).